The following is a 146-amino-acid chain: Deoxyuridine 5'-triphosphate nucleotidohydrolase (146 aa).

Substrate is bound by residues Arg60–Gly62, Asn73, and Val77–Asp79.

This sequence belongs to the dUTPase family. It depends on Mg(2+) as a cofactor.

The enzyme catalyses dUTP + H2O = dUMP + diphosphate + H(+). Its pathway is pyrimidine metabolism; dUMP biosynthesis; dUMP from dCTP (dUTP route): step 2/2. Functionally, this enzyme is involved in nucleotide metabolism: it produces dUMP, the immediate precursor of thymidine nucleotides and it decreases the intracellular concentration of dUTP so that uracil cannot be incorporated into DNA. This is Deoxyuridine 5'-triphosphate nucleotidohydrolase from Tropheryma whipplei (strain TW08/27) (Whipple's bacillus).